Reading from the N-terminus, the 391-residue chain is Coproporphyrin III ferrochelatase (391 aa).

Fe-coproporphyrin III-binding residues include Ser79 and Tyr148. The Fe(2+) site is built by His211 and Glu305.

Belongs to the ferrochelatase family.

It is found in the cytoplasm. It catalyses the reaction Fe-coproporphyrin III + 2 H(+) = coproporphyrin III + Fe(2+). It functions in the pathway porphyrin-containing compound metabolism; protoheme biosynthesis. Its function is as follows. Involved in coproporphyrin-dependent heme b biosynthesis. Catalyzes the insertion of ferrous iron into coproporphyrin III to form Fe-coproporphyrin III. The polypeptide is Coproporphyrin III ferrochelatase (Tropheryma whipplei (strain TW08/27) (Whipple's bacillus)).